The sequence spans 242 residues: Lactate utilization protein A 2 (242 aa).

This sequence belongs to the LutA/YkgE family.

Is involved in L-lactate degradation and allows cells to grow with lactate as the sole carbon source. The protein is Lactate utilization protein A 2 of Bacillus cereus (strain 03BB102).